Consider the following 170-residue polypeptide: S-ribosylhomocysteine lyase (170 aa).

Fe cation-binding residues include H54, H58, and C128.

The protein belongs to the LuxS family. Homodimer. Requires Fe cation as cofactor.

It catalyses the reaction S-(5-deoxy-D-ribos-5-yl)-L-homocysteine = (S)-4,5-dihydroxypentane-2,3-dione + L-homocysteine. In terms of biological role, involved in the synthesis of autoinducer 2 (AI-2) which is secreted by bacteria and is used to communicate both the cell density and the metabolic potential of the environment. The regulation of gene expression in response to changes in cell density is called quorum sensing. Catalyzes the transformation of S-ribosylhomocysteine (RHC) to homocysteine (HC) and 4,5-dihydroxy-2,3-pentadione (DPD). In Marinomonas sp. (strain MWYL1), this protein is S-ribosylhomocysteine lyase.